Here is a 460-residue protein sequence, read N- to C-terminus: NADH-ubiquinone oxidoreductase chain 4 (460 aa).

Helical transmembrane passes span 20-42 (PKWLWSTTTAHGLLIALISLTWL), 61-81 (PLSTPLLGLTCWLLPLMVLAS), 93-113 (QRLYITLLASLQTFLIMAFGA), 114-134 (TEIIMFYIMFEATLIPTLIII), 148-168 (TYFLFYTLAGSLPLLVALLLL), 195-215 (IWWAGCLIAFLVKMPLYGVHL), 225-245 (PVAGSMVLAAVLLKLGGYGMM), 258-278 (LAYPFIILALWGIIMTGSICL), 285-304 (SLIAYSSVSHMGLVAGGILI), 309-331 (GFTGAIILMIAHGLVSSALFCLA), 351-371 (MIFPLTAVWWFIANLANLALP), and 394-414 (IILTGTGTLITAGYSLYLFLM).

The protein belongs to the complex I subunit 4 family.

The protein localises to the mitochondrion membrane. It carries out the reaction a ubiquinone + NADH + 5 H(+)(in) = a ubiquinol + NAD(+) + 4 H(+)(out). Core subunit of the mitochondrial membrane respiratory chain NADH dehydrogenase (Complex I) that is believed to belong to the minimal assembly required for catalysis. Complex I functions in the transfer of electrons from NADH to the respiratory chain. The immediate electron acceptor for the enzyme is believed to be ubiquinone. This Formosania lacustris (Oriental stream loach) protein is NADH-ubiquinone oxidoreductase chain 4 (MT-ND4).